We begin with the raw amino-acid sequence, 211 residues long: Major fimbrial subunit (211 aa).

The first 20 residues, 1 to 20 (MKKTLLGSLILLAFAGNVQA), serve as a signal peptide directing secretion. An intrachain disulfide couples Cys-43 to Cys-83.

This sequence belongs to the fimbrial protein family.

It is found in the fimbrium. Its function is as follows. Mediates adherence to oropharyngeal epithelial cells. Helps the airway colonization process. The chain is Major fimbrial subunit (hifA) from Haemophilus influenzae.